We begin with the raw amino-acid sequence, 493 residues long: D-glyceraldehyde dehydrogenase (NADP(+)) (493 aa).

NADP(+) is bound by residues 144 to 147, R155, 170 to 174, 202 to 208, 223 to 246, C279, and 379 to 381; these read TPWN, KPSSD, KGSEIGD, GSTS…ILEL, and EIF. Residues N147 and R155 each contribute to the substrate site. The active-site Proton acceptor is E245. C279 contacts substrate. Residue C279 is the Proton donor of the active site.

The protein belongs to the aldehyde dehydrogenase family. Glyceraldehyde dehydrogenase subfamily. In terms of assembly, homotetramer. Dimer of dimers.

It carries out the reaction D-glyceraldehyde + NADP(+) + H2O = (R)-glycerate + NADPH + 2 H(+). It functions in the pathway carbohydrate degradation; glycolysis. With respect to regulation, stable for 2 hours at 60 degrees Celsius but activity is decreased to less than 50 percent within 15 minutes at 70 degrees Celsius. Its function is as follows. NADP-dependent dehydrogenase of the nED (non-phosphorylated Entner-Doudoroff) pathway with highest activity towards glyceraldehydes (e.g. D,L-glyceraldehyde and D-glyceraldehyde), to a lesser extent towards D,L-glyceraldehyde-3-phosphate and glycolaldehyde, but no activity towards aliphatic or aromatic aldehydes. This is D-glyceraldehyde dehydrogenase (NADP(+)) from Picrophilus torridus (strain ATCC 700027 / DSM 9790 / JCM 10055 / NBRC 100828 / KAW 2/3).